The primary structure comprises 62 residues: MRCVPVFIILLLLSPSAPSVDAHPMTKDDVPQASFHDDAKRTLQVPWMKRGCCARLTCCVGR.

A signal peptide spans 1 to 22 (MRCVPVFIILLLLSPSAPSVDA). A propeptide spanning residues 23–48 (HPMTKDDVPQASFHDDAKRTLQVPWM) is cleaved from the precursor. Position 60 is a valine amide (valine 60).

It belongs to the conotoxin T superfamily. Post-translationally, contains 2 disulfide bonds that can be either 'C1-C3, C2-C4' or 'C1-C4, C2-C3', since these disulfide connectivities have been observed for conotoxins with cysteine framework V (for examples, see AC P0DQQ7 and AC P81755). Expressed by the venom duct.

It localises to the secreted. The sequence is that of Conotoxin Qc5.1 from Conus quercinus (Oak cone).